The sequence spans 78 residues: DNA-directed RNA polymerase subunit omega (78 aa).

This sequence belongs to the RNA polymerase subunit omega family. In terms of assembly, in cyanobacteria the RNAP catalytic core is composed of 2 alpha, 1 beta, 1 beta', 1 gamma and 1 omega subunit. When a sigma factor is associated with the core the holoenzyme is formed, which can initiate transcription.

It carries out the reaction RNA(n) + a ribonucleoside 5'-triphosphate = RNA(n+1) + diphosphate. In terms of biological role, promotes RNA polymerase assembly. Latches the N- and C-terminal regions of the beta' subunit thereby facilitating its interaction with the beta and alpha subunits. In Prochlorococcus marinus (strain MIT 9301), this protein is DNA-directed RNA polymerase subunit omega.